The following is a 543-amino-acid chain: T-complex protein 1 subunit eta (543 aa).

Position 1 is an N-acetylmethionine (Met1). Gly41 is a binding site for ADP. Residue Gly41 coordinates ATP. An N6-acetyllysine modification is found at Lys67. Asp92 provides a ligand contact to Mg(2+). Residues Gly93, Thr94, Thr95, Ser96, Ser164, and Ser165 each coordinate ADP. Position 93 (Gly93) interacts with ATP. Ser96 contacts ATP. Lys250 and Lys320 each carry N6-acetyllysine. 2 residues coordinate ATP: Arg398 and Gly409. Gly409 is a binding site for ADP. Lys430 participates in a covalent cross-link: Glycyl lysine isopeptide (Lys-Gly) (interchain with G-Cter in SUMO2). Residues Glu494 and Arg499 each coordinate ADP. An ATP-binding site is contributed by Arg499. The disordered stretch occupies residues 524 to 543 (RSTVDAPTAAGRGRGRGRPH). Arg535 is subject to Omega-N-methylarginine.

The protein belongs to the TCP-1 chaperonin family. As to quaternary structure, component of the chaperonin-containing T-complex (TRiC), a hexadecamer composed of two identical back-to-back stacked rings enclosing a protein folding chamber. Each ring is made up of eight different subunits: TCP1/CCT1, CCT2, CCT3, CCT4, CCT5, CCT6A/CCT6, CCT7, CCT8. Interacts with PACRG. Interacts with DLEC1.

It localises to the cytoplasm. It catalyses the reaction ATP + H2O = ADP + phosphate + H(+). Functionally, component of the chaperonin-containing T-complex (TRiC), a molecular chaperone complex that assists the folding of actin, tubulin and other proteins upon ATP hydrolysis. The TRiC complex mediates the folding of WRAP53/TCAB1, thereby regulating telomere maintenance. In Homo sapiens (Human), this protein is T-complex protein 1 subunit eta (CCT7).